Here is a 362-residue protein sequence, read N- to C-terminus: Protein indeterminate-domain 16 (362 aa).

The disordered stretch occupies residues 1–22; that stretch reads MELTQPIRENGDPQGHQLTDPD. 2 consecutive C2H2-type zinc fingers follow at residues 39-61 and 82-112; these read YVCE…RRRH and YVCP…RRKH. A CCHC-type 1; atypical zinc finger spans residues 118-142; it reads WVCERCSKGYAVQSDYKAHLKTCGS. 8 residues coordinate Zn(2+): C120, C123, H136, C140, C147, C149, H162, and C166. The segment at 145–168 adopts a CCHC-type 2; atypical zinc-finger fold; the sequence is HSCDCGRVFSRVESFIEHQDTCTI. Residues 155 to 167 are SHR-binding; that stretch reads RVESFIEHQDTCT. Residues 247–278 form a disordered region; that stretch reads SAQARHNEKRETSLTKERANEEARKAEETRQE. The segment covering 251 to 278 has biased composition (basic and acidic residues); sequence RHNEKRETSLTKERANEEARKAEETRQE. Residues 252 to 319 adopt a coiled-coil conformation; it reads HNEKRETSLT…VREEAIKRIN (68 aa).

As to expression, highly expressed in leaves, hypocotyls, roots, vasculature of cotyledons, floral organs and in the endodermis and vasculaturenof inflorescence stems.

Its subcellular location is the nucleus. Transcription factor regulating lateral organ morphogenesis and gravitropic responses. Has a redundant role with IDD14 in directing leaf and floral organ morphogenesis. Acts cooperatively with IDD15 to control silique and branche orientation. Involved in the establishment of auxin gradients through the regulation of auxin biosynthesis and transport. This Arabidopsis thaliana (Mouse-ear cress) protein is Protein indeterminate-domain 16.